The primary structure comprises 373 residues: 3-isopropylmalate dehydrogenase gloI (373 aa).

Substrate is bound by residues serine 92, arginine 98, and arginine 108. 3 residues coordinate Mg(2+): aspartate 228, aspartate 253, and aspartate 257. NADP(+) contacts are provided by residues 294–300 and asparagine 307; that span reads HGSAPDI.

It belongs to the isocitrate and isopropylmalate dehydrogenases family. As to quaternary structure, homodimer. The cofactor is Mg(2+). Mn(2+) serves as cofactor.

It carries out the reaction (2R,3S)-3-isopropylmalate + NAD(+) = 4-methyl-2-oxopentanoate + CO2 + NADH. The protein operates within mycotoxin biosynthesis. 3-isopropylmalate dehydrogenase; part of the gene cluster that mediates the biosynthesis of pneumocandins, lipohexapeptides of the echinocandin family that prevent fungal cell wall formation by non-competitive inhibition of beta-1,3-glucan synthase. The 10,12-dimethylmyristoyl side chain is synthesized by the reducing polyketide synthase gloL/GLPKS4. The thioesterase gloN/GLHYD exclusively interacts with gloL/GLPKS4 to maintain turnover of the polyketide side chain. The 10R,12S-dimethylmyristic acid is then transferred to the first thiolation domain of the nonribosomal peptide synthetase gloA/GLNRPS4 by the acyl-AMP ligase gloD/GLligase, followed by its acylation to L-ornithine to trigger elongation of the cyclic hexapeptide. L-ornithine, 4R-hydroxyl-L-proline (generated from L-proline by the dioxygenase gloF/GLOXY2), 3S-hydroxyl-L-homotyrosine (generated by gloG/GLHtyB, gloH/GLHtyA, gloI/GLHtyC, gloJ/GLHtyD and hydroxylated at C-3 by the dioxygenase gloM/GLOXY1), 3R-hydroxyl-L-glutamine (generated from L-glutamine probably by the dioxygenase gloE/GLOXY3) and 3S-hydroxyl-L-proline (generated from L-proline by the dioxygenase gloF/GLOXY2 to yield pneumocandin B0), or 3S-hydroxyl-4S-methyl-L-proline (generated from L-leucine by the dioxygenase gloC/GLOXY4 to yield pneumocandin A0) are sequentially added to the growing chain. The last C domain of gloA/GLNRPS4 is proposed to be responsible for cyclization by condensation to form the peptide bond between L-ornithine and 3S-hydroxyl-4S-methyl-L-proline (for pneumocandin A0) or 3S-hydroxyl-L-proline (for pneumocandin B0). Finally, the subsequent C-4 hydroxylation of 3S-hydroxyl-L-homotyrosine and L-ornithine dihydroxylation at C-4 and C-5 are performed by the cytochrome P450 monooxygenases gloP/GLP450-1 and gloO/GLP450-2, respectively. The sequence is that of 3-isopropylmalate dehydrogenase gloI from Glarea lozoyensis (strain ATCC 20868 / MF5171).